Reading from the N-terminus, the 55-residue chain is Potassium channel toxin alpha-KTX 12 Sp2 (55 aa).

The signal sequence occupies residues 1–18 (MRLAIILLLMTTIVLTIG). 3 cysteine pairs are disulfide-bonded: C26–C46, C32–C51, and C36–C53.

The protein belongs to the short scorpion toxin superfamily. Potassium channel inhibitor family. Alpha-KTx 12 subfamily. Expressed by the venom gland.

It is found in the secreted. Blocks mouse voltage-gated potassium channels Kv1.3/KCNA3 (IC(50)=0.3-30 nM), when the channel is expressed in Jurkat T cells or in HEK293 cells. Also shows a weaker inhibition on mKv1.2/KCNA2 (IC(50)=56.9 nM) and mKv1.1/KCNA1 (IC(50)=485 nM). Probably through the inhibition of both Kv1.2/KCNA2 and Kv1.3/KCNA3, the toxin also reduces the free calcium concentration in Jurkat T cells, inhibits the activation of Jurkat T cells and reduces the release of inflammatory cytokines interleukin-2, showing a strong immunosuppressant effect. The polypeptide is Potassium channel toxin alpha-KTX 12 Sp2 (Scorpiops pococki (Scorpion)).